Reading from the N-terminus, the 484-residue chain is UDP-N-acetylmuramate--L-alanine ligase (484 aa).

An ATP-binding site is contributed by 125–131 (GTHGKTT).

This sequence belongs to the MurCDEF family.

Its subcellular location is the cytoplasm. The enzyme catalyses UDP-N-acetyl-alpha-D-muramate + L-alanine + ATP = UDP-N-acetyl-alpha-D-muramoyl-L-alanine + ADP + phosphate + H(+). It functions in the pathway cell wall biogenesis; peptidoglycan biosynthesis. In terms of biological role, cell wall formation. The chain is UDP-N-acetylmuramate--L-alanine ligase from Buchnera aphidicola subsp. Acyrthosiphon pisum (strain Tuc7).